Consider the following 483-residue polypeptide: Glutamate--tRNA ligase (483 aa).

The 'HIGH' region motif lies at 11–21; sequence PSPTGHLHIGN. The 'KMSKS' region signature appears at 252 to 256; that stretch reads KLSKR. Lys255 contacts ATP.

It belongs to the class-I aminoacyl-tRNA synthetase family. Glutamate--tRNA ligase type 1 subfamily. Monomer.

The protein resides in the cytoplasm. It catalyses the reaction tRNA(Glu) + L-glutamate + ATP = L-glutamyl-tRNA(Glu) + AMP + diphosphate. Functionally, catalyzes the attachment of glutamate to tRNA(Glu) in a two-step reaction: glutamate is first activated by ATP to form Glu-AMP and then transferred to the acceptor end of tRNA(Glu). This Bacillus velezensis (strain DSM 23117 / BGSC 10A6 / LMG 26770 / FZB42) (Bacillus amyloliquefaciens subsp. plantarum) protein is Glutamate--tRNA ligase.